Consider the following 508-residue polypeptide: Glycerol kinase (508 aa).

Position 15 (T15) interacts with ADP. T15, S16, and S17 together coordinate ATP. Sn-glycerol 3-phosphate is bound at residue T15. R19 contributes to the ADP binding site. The sn-glycerol 3-phosphate site is built by R85, E86, Y138, and D251. Positions 85, 86, 138, 251, and 252 each coordinate glycerol. ADP contacts are provided by T273, G317, and G419. ATP-binding residues include T273, G317, and G419.

It belongs to the FGGY kinase family.

It carries out the reaction glycerol + ATP = sn-glycerol 3-phosphate + ADP + H(+). Its pathway is polyol metabolism; glycerol degradation via glycerol kinase pathway; sn-glycerol 3-phosphate from glycerol: step 1/1. With respect to regulation, inhibited by fructose 1,6-bisphosphate (FBP). Its function is as follows. Key enzyme in the regulation of glycerol uptake and metabolism. Catalyzes the phosphorylation of glycerol to yield sn-glycerol 3-phosphate. In Mycoplasma genitalium (strain ATCC 33530 / DSM 19775 / NCTC 10195 / G37) (Mycoplasmoides genitalium), this protein is Glycerol kinase.